The primary structure comprises 584 residues: uncharacterized protein (584 aa).

A helical membrane pass occupies residues 15-35 (FIFFVLVFFICIIFGCIYESL). 2 stretches are compositionally biased toward polar residues: residues 184–194 (DVSTENSYTHN) and 204–225 (GKRT…SYNI). The segment at 184–226 (DVSTENSYTHNNSRDDEPQNGKRTYNNQSNNNLPYDNSSYNIS) is disordered. Coiled coils occupy residues 267 to 319 (DNYP…DNYP) and 436 to 477 (RDNH…HYKR).

It localises to the membrane. This is an uncharacterized protein from Plasmodium falciparum (isolate 3D7).